The chain runs to 461 residues: Chromosomal replication initiator protein DnaA (461 aa).

The segment at 1-68 (MINAWAQIEH…EKAAASVLGS (68 aa)) is domain I, interacts with DnaA modulators. The domain II stretch occupies residues 68-118 (SVPTITVVSGEEPAAAPRPVQVPAQKRPAAARTSGAEQMGLPLHYASRSAD). The interval 119–336 (SIKWMHSFDE…SCLRNLLLKA (218 aa)) is domain III, AAA+ region. 4 residues coordinate ATP: glycine 162, glycine 164, lysine 165, and threonine 166. The interval 337–461 (RLLNQQITMD…VERNGRIIHP (125 aa)) is domain IV, binds dsDNA.

The protein belongs to the DnaA family. In terms of assembly, oligomerizes as a right-handed, spiral filament on DNA at oriC.

It localises to the cytoplasm. Plays an essential role in the initiation and regulation of chromosomal replication. ATP-DnaA binds to the origin of replication (oriC) to initiate formation of the DNA replication initiation complex once per cell cycle. Binds the DnaA box (a 9 base pair repeat at the origin) and separates the double-stranded (ds)DNA. Forms a right-handed helical filament on oriC DNA; dsDNA binds to the exterior of the filament while single-stranded (ss)DNA is stabiized in the filament's interior. The ATP-DnaA-oriC complex binds and stabilizes one strand of the AT-rich DNA unwinding element (DUE), permitting loading of DNA polymerase. After initiation quickly degrades to an ADP-DnaA complex that is not apt for DNA replication. Binds acidic phospholipids. The sequence is that of Chromosomal replication initiator protein DnaA from Oleidesulfovibrio alaskensis (strain ATCC BAA-1058 / DSM 17464 / G20) (Desulfovibrio alaskensis).